A 147-amino-acid polypeptide reads, in one-letter code: Hemoglobin subunit epsilon (147 aa).

Residues 3–147 (HFTAEEKAAI…VAIALGHKYH (145 aa)) enclose the Globin domain. Ser-14 and Ser-51 each carry phosphoserine. His-64 and His-93 together coordinate heme b.

This sequence belongs to the globin family. As to quaternary structure, heterotetramer of two alpha chains and two epsilon chains in early embryonic hemoglobin Gower-2; two zeta chains and two epsilon chains in early embryonic hemoglobin Gower-1. Red blood cells.

Its function is as follows. The epsilon chain is a beta-type chain of early mammalian embryonic hemoglobin. The chain is Hemoglobin subunit epsilon (HBE1) from Leontopithecus rosalia (Golden lion tamarin).